The sequence spans 292 residues: Small ribosomal subunit protein uS2 (292 aa).

Residues 230 to 292 (RSGGAPGSEK…KKEAGSGEEA (63 aa)) form a disordered region. 2 stretches are compositionally biased toward basic and acidic residues: residues 247–259 (EWERELLEGKTEA) and 271–292 (PAKEEKAQAPEEKKEAGSGEEA).

This sequence belongs to the universal ribosomal protein uS2 family.

This chain is Small ribosomal subunit protein uS2, found in Thermobifida fusca (strain YX).